The primary structure comprises 311 residues: Protein translocase subunit SecF (311 aa).

The next 6 helical transmembrane spans lie at 23–42, 140–160, 164–184, 194–214, 246–266, and 272–292; these read VSYSFSIILSLISLIWISIY, IEAGAMAMLFSFLAIMVYIGV, WYFGFGILIALVHDVILALGF, LSTIAAVLTIIGYSVNDSVVI, ILTVITTLLANLALILFGGKA, and VLVFFGIIAGTYSSIFISAPI.

The protein belongs to the SecD/SecF family. SecF subfamily. In terms of assembly, forms a complex with SecD. Part of the essential Sec protein translocation apparatus which comprises SecA, SecYEG and auxiliary proteins SecDF-YajC and YidC.

The protein localises to the cell inner membrane. Part of the Sec protein translocase complex. Interacts with the SecYEG preprotein conducting channel. SecDF uses the proton motive force (PMF) to complete protein translocation after the ATP-dependent function of SecA. The protein is Protein translocase subunit SecF of Rickettsia prowazekii (strain Madrid E).